We begin with the raw amino-acid sequence, 312 residues long: 2-aminophenol 1,6-dioxygenase subunit beta (312 aa).

The Fe cation site is built by His-13, His-62, and Glu-251.

This sequence belongs to the LigB/MhpB extradiol dioxygenase family. The APD complex is a heterotetramer of 2 alpha (CnbCa) and 2 beta (CnbCb) subunits. Fe(2+) is required as a cofactor.

It carries out the reaction 2-aminophenol + O2 = 2-aminomuconate 6-semialdehyde. The enzyme catalyses 2-amino-5-chlorophenol + O2 = 2-amino-5-chloromuconate 6-semialdehyde. It functions in the pathway xenobiotic degradation; nitrobenzene degradation. Its pathway is xenobiotic degradation; 4-chloronitrobenzene degradation. With respect to regulation, complete loss of activity in the presence of Ni(2+), Co(2+), Cd(2+), Zn(2+) and hydrogen peroxide, however activity with hydrogen peroxide partially restored upon addition of excess ascorbate. Partially inhibited by Fe(2+), Mg(2+), Ca(2+), Mn(2+), Cu(2+) and also by EDTA, at 2 mM concentration. Total activity inhibited in the presence of catechol or 4-nitrocatechol but completely restored after removal of catechol and addition of 2 mM Fe(2+) and 5 mM ascorbate. Functionally, component of the 2-aminophenol 1,6-dioxygenase (APD) complex that catalyzes the ring fission of 2-aminophenol to produce 2-aminomuconic semialdehyde. CnbCb seems to be the catalytic subunit of the complex. Also active on other substrates such as 2-amino-5-chlorophenol (68% activity), protocatechuate (33% activity) and catechol (5% activity). Both 2-aminophenol and 2-amino-5-cholorophenol are likely native substrates for this dioxygenase which is involved in the reductive degradation pathway of both nitrobenzene (NB) and 4-chloronitrobenzene (4-CNB), allowing C.testosteroni strain CNB-1 to grow on these compounds as sole source of carbon, nitrogen, and energy. The polypeptide is 2-aminophenol 1,6-dioxygenase subunit beta (Comamonas testosteroni (Pseudomonas testosteroni)).